The chain runs to 487 residues: Serine/threonine-protein kinase 4 (487 aa).

Methionine 1 bears the N-acetylmethionine mark. A Phosphothreonine modification is found at threonine 3. In terms of domain architecture, Protein kinase spans 30–281 (FDVLEKLGEG…ATQLLQHPFV (252 aa)). ATP-binding positions include 36–44 (LGEGSYGSV) and lysine 59. Aspartate 149 (proton acceptor) is an active-site residue. Threonine 183 bears the Phosphothreonine; by autocatalysis mark. Serine 265 is modified (phosphoserine). Residues 290 to 310 (LRDLINEAMDVKLKRQESQQR) adopt a coiled-coil conformation. A compositionally biased stretch (basic and acidic residues) spans 303-312 (KRQESQQREV). The interval 303–332 (KRQESQQREVDQDDEENSEEDEMDSGTMVR) is disordered. The segment covering 313 to 326 (DQDDEENSEEDEMD) has biased composition (acidic residues). Serine 320 bears the Phosphoserine mark. 2 positions are modified to phosphothreonine: threonine 340 and threonine 367. Position 387 is a phosphothreonine; by PKB/AKT1 (threonine 387). Serine 410 and serine 414 each carry phosphoserine. Residue tyrosine 433 is modified to Phosphotyrosine. The SARAH domain maps to 433–480 (YEFLKSWTVEDLQKRLLALDPMMEQEIEEIRQKYQSKRQPILDAIEAK).

The protein belongs to the protein kinase superfamily. STE Ser/Thr protein kinase family. STE20 subfamily. As to quaternary structure, homodimer; mediated via the coiled-coil region. Interacts with NORE1, which inhibits autoactivation. Interacts with and stabilizes SAV1. Interacts with RASSF1. Interacts with FOXO3. Interacts with RASSF2 (via SARAH domain). Interacts with AR, PKB/AKT1, TNNI3 and SIRT1. Interacts with DLG5 (via PDZ domain 3). Interacts with MARK3 and SCRIB in the presence of DLG5. Mg(2+) serves as cofactor. Post-translationally, autophosphorylated on serine and threonine residues. Phosphorylation at Thr-387 by PKB/AKT1, leads to inhibition of its: kinase activity, nuclear translocation and autophosphorylation at Thr-183. It also diminishes its cleavage by caspases and its ability to phosphorylate FOXO3. Proteolytically cleaved by caspase-3 during apoptosis at Asp-326 and Asp-349 resulting in a 37 kDa or a 39 kDa subunit respectively. The 39 kDa subunit is further cleaved into the 37 kDa form. Proteolytic cleavage results in kinase activation and nuclear translocation of the truncated form (MST1/N). It is less likely that cleavage at Asp-349 is a prerequisite for activation as this site is not conserved in the murine ortholog.

The protein resides in the cytoplasm. The protein localises to the nucleus. It carries out the reaction L-seryl-[protein] + ATP = O-phospho-L-seryl-[protein] + ADP + H(+). It catalyses the reaction L-threonyl-[protein] + ATP = O-phospho-L-threonyl-[protein] + ADP + H(+). Its activity is regulated as follows. Inhibited by the C-terminal non-catalytic region. Activated by caspase-cleavage. Full activation also requires homodimerization and autophosphorylation of Thr-183. Activated by RASSF1 which acts by preventing its dephosphorylation. Its function is as follows. Stress-activated, pro-apoptotic kinase which, following caspase-cleavage, enters the nucleus and induces chromatin condensation followed by internucleosomal DNA fragmentation. Key component of the Hippo signaling pathway which plays a pivotal role in organ size control and tumor suppression by restricting proliferation and promoting apoptosis. The core of this pathway is composed of a kinase cascade wherein STK3/MST2 and STK4/MST1, in complex with its regulatory protein SAV1, phosphorylates and activates LATS1/2 in complex with its regulatory protein MOB1, which in turn phosphorylates and inactivates YAP1 oncoprotein and WWTR1/TAZ. Phosphorylation of YAP1 by LATS2 inhibits its translocation into the nucleus to regulate cellular genes important for cell proliferation, cell death, and cell migration. STK3/MST2 and STK4/MST1 are required to repress proliferation of mature hepatocytes, to prevent activation of facultative adult liver stem cells (oval cells), and to inhibit tumor formation. Phosphorylates 'Ser-14' of histone H2B (H2BS14ph) during apoptosis. Phosphorylates FOXO3 upon oxidative stress, which results in its nuclear translocation and cell death initiation. Phosphorylates MOBKL1A, MOBKL1B and RASSF2. Phosphorylates TNNI3 (cardiac Tn-I) and alters its binding affinity to TNNC1 (cardiac Tn-C) and TNNT2 (cardiac Tn-T). Phosphorylates FOXO1 on 'Ser-212' and regulates its activation and stimulates transcription of PMAIP1 in a FOXO1-dependent manner. Phosphorylates SIRT1 and inhibits SIRT1-mediated p53/TP53 deacetylation, thereby promoting p53/TP53 dependent transcription and apoptosis upon DNA damage. Acts as an inhibitor of PKB/AKT1. Phosphorylates AR on 'Ser-650' and suppresses its activity by intersecting with PKB/AKT1 signaling and antagonizing formation of AR-chromatin complexes. In Papio anubis (Olive baboon), this protein is Serine/threonine-protein kinase 4 (STK4).